Consider the following 236-residue polypeptide: 1-(5-phosphoribosyl)-5-[(5-phosphoribosylamino)methylideneamino] imidazole-4-carboxamide isomerase (236 aa).

Aspartate 8 acts as the Proton acceptor in catalysis. Aspartate 129 (proton donor) is an active-site residue.

This sequence belongs to the HisA/HisF family.

It localises to the cytoplasm. It catalyses the reaction 1-(5-phospho-beta-D-ribosyl)-5-[(5-phospho-beta-D-ribosylamino)methylideneamino]imidazole-4-carboxamide = 5-[(5-phospho-1-deoxy-D-ribulos-1-ylimino)methylamino]-1-(5-phospho-beta-D-ribosyl)imidazole-4-carboxamide. It functions in the pathway amino-acid biosynthesis; L-histidine biosynthesis; L-histidine from 5-phospho-alpha-D-ribose 1-diphosphate: step 4/9. The polypeptide is 1-(5-phosphoribosyl)-5-[(5-phosphoribosylamino)methylideneamino] imidazole-4-carboxamide isomerase (Methanocorpusculum labreanum (strain ATCC 43576 / DSM 4855 / Z)).